We begin with the raw amino-acid sequence, 189 residues long: ATP-dependent protease subunit HslV (189 aa).

Residue Thr12 is part of the active site. Na(+) contacts are provided by Ala172, Cys175, and Thr178.

It belongs to the peptidase T1B family. HslV subfamily. A double ring-shaped homohexamer of HslV is capped on each side by a ring-shaped HslU homohexamer. The assembly of the HslU/HslV complex is dependent on binding of ATP.

The protein localises to the cytoplasm. The enzyme catalyses ATP-dependent cleavage of peptide bonds with broad specificity.. With respect to regulation, allosterically activated by HslU binding. In terms of biological role, protease subunit of a proteasome-like degradation complex believed to be a general protein degrading machinery. The sequence is that of ATP-dependent protease subunit HslV from Ehrlichia ruminantium (strain Welgevonden).